The sequence spans 555 residues: Inositol 1,4,5-trisphosphate receptor-interacting protein (555 aa).

The N-terminal stretch at methionine 1 to alanine 15 is a signal peptide. The Extracellular segment spans residues isoleucine 16–alanine 81. The N-linked (GlcNAc...) asparagine glycan is linked to asparagine 27. The stretch at glutamate 32–alanine 84 forms a coiled coil. The helical transmembrane segment at histidine 82–leucine 102 threads the bilayer. Residues arginine 103–serine 555 are Cytoplasmic-facing.

The protein belongs to the ITPRIP family. As to quaternary structure, interacts with ITPR.

It is found in the cell membrane. It localises to the nucleus outer membrane. Enhances Ca(2+)-mediated inhibition of inositol 1,4,5-triphosphate receptor (ITPR) Ca(2+) release. This is Inositol 1,4,5-trisphosphate receptor-interacting protein (Itprip) from Mus musculus (Mouse).